The sequence spans 238 residues: Lytic polysaccharide monooxygenase NCU01050 (238 aa).

The first 15 residues, 1–15, serve as a signal peptide directing secretion; the sequence is MKVLAPLVLASAASA. His16 lines the Cu(2+) pocket. Glu45 provides a ligand contact to O2. Intrachain disulfides connect Cys54-Cys186 and Cys156-Cys238. N-linked (GlcNAc...) asparagine glycosylation occurs at Asn75. Position 99 (His99) interacts with Cu(2+). Residues His172 and Gln181 each coordinate O2. His172 serves as the catalytic Proton donor. Residue Tyr183 coordinates Cu(2+).

This sequence belongs to the polysaccharide monooxygenase AA9 family. Monomer. It depends on Cu(2+) as a cofactor. In terms of processing, N-linked glycans containing mannose and N-acetylglucosamine.

Its subcellular location is the secreted. It carries out the reaction [(1-&gt;4)-beta-D-glucosyl]n+m + reduced acceptor + O2 = 4-dehydro-beta-D-glucosyl-[(1-&gt;4)-beta-D-glucosyl]n-1 + [(1-&gt;4)-beta-D-glucosyl]m + acceptor + H2O.. Its pathway is glycan metabolism; cellulose degradation. Its activity is regulated as follows. Inhibited by increasing levels of ascorbic acid. Functionally, catalyzes the oxidative cleavage of glycosidic bonds in cellulosic substrates via a copper-dependent mechanism. In the presence of an exogenous reductant ascorbic acid, degrades phosphoric acid swollen cellulose (PASC) to cello-oligosaccharides and 4-ketoaldoses, the end products oxidized at the non-reducing end. Somewhat active toward tamarind xyloglucan and konjac glucomannan, with improved activity with glucomannan in the presence of PASC. H(2)O(2) is able to substitute for O(2) in reactions with PASC, xyloglucan and glucomannan. Very weak activity on cellopentaose. No activity with birchwood xylan or ivory nut mannan. Disrupts plant cell wall polysaccharide substrates, such as recalcitrant crystalline cellulose. The sequence is that of Lytic polysaccharide monooxygenase NCU01050 from Neurospora crassa (strain ATCC 24698 / 74-OR23-1A / CBS 708.71 / DSM 1257 / FGSC 987).